The following is a 640-amino-acid chain: Acid beta-fructofuranosidase 2, vacuolar (640 aa).

A disordered region spans residues 1 to 22 (MDTNTTSYTPLPGDPFLSGPPE). Over 1 to 29 (MDTNTTSYTPLPGDPFLSGPPETPRRPLK) the chain is Cytoplasmic. Residues 1-78 (MDTNTTSYTP…HPQSTTNTML (78 aa)) constitute a propeptide, removed in mature form. The chain crosses the membrane as a helical span at residues 30-49 (GFAVIFASVIFLMSLVALII). The Lumenal segment spans residues 50-616 (HQGPQQPPDV…FSPDAASHSS (567 aa)). Substrate-binding positions include 93 to 96 (WMND), Gln112, Trp120, 155 to 156 (WT), 219 to 220 (RD), Glu274, and Asp307. Asp96 is a catalytic residue. An intrachain disulfide couples Cys464 to Cys512. Residues 617–639 (FTPVTVFIKFIVPFGIFLTLYFV) form a helical membrane-spanning segment. Arg640 is a topological domain (cytoplasmic).

Belongs to the glycosyl hydrolase 32 family. Expressed in buds, stems, roots and leaves.

It is found in the membrane. The protein localises to the vacuole membrane. It carries out the reaction Hydrolysis of terminal non-reducing beta-D-fructofuranoside residues in beta-D-fructofuranosides.. Functionally, vacuolar invertase. This Rosa hybrid cultivar protein is Acid beta-fructofuranosidase 2, vacuolar.